The following is a 927-amino-acid chain: Bifunctional glutamine synthetase adenylyltransferase/adenylyl-removing enzyme (927 aa).

The interval 1–428 (MTMTDASDLL…AQFDQVFADK (428 aa)) is adenylyl removase. The tract at residues 438 to 927 (DQAAGCIWSG…AALWARVFGA (490 aa)) is adenylyl transferase.

This sequence belongs to the GlnE family. Requires Mg(2+) as cofactor.

The catalysed reaction is [glutamine synthetase]-O(4)-(5'-adenylyl)-L-tyrosine + phosphate = [glutamine synthetase]-L-tyrosine + ADP. It catalyses the reaction [glutamine synthetase]-L-tyrosine + ATP = [glutamine synthetase]-O(4)-(5'-adenylyl)-L-tyrosine + diphosphate. Functionally, involved in the regulation of glutamine synthetase GlnA, a key enzyme in the process to assimilate ammonia. When cellular nitrogen levels are high, the C-terminal adenylyl transferase (AT) inactivates GlnA by covalent transfer of an adenylyl group from ATP to specific tyrosine residue of GlnA, thus reducing its activity. Conversely, when nitrogen levels are low, the N-terminal adenylyl removase (AR) activates GlnA by removing the adenylyl group by phosphorolysis, increasing its activity. The regulatory region of GlnE binds the signal transduction protein PII (GlnB) which indicates the nitrogen status of the cell. The polypeptide is Bifunctional glutamine synthetase adenylyltransferase/adenylyl-removing enzyme (Burkholderia pseudomallei (strain K96243)).